Here is a 317-residue protein sequence, read N- to C-terminus: 17-beta-hydroxysteroid dehydrogenase type 6 (317 aa).

Residues 1-17 (MWFYLVTLVGLYYLLRW) form the signal peptide. Residue 33–57 (FITGCDSGFGNLLARQLDRRGMRVL) participates in NAD(+) binding. Residue N161 is glycosylated (N-linked (GlcNAc...) asparagine). A substrate-binding site is contributed by S164. The active-site Proton acceptor is the Y176.

It belongs to the short-chain dehydrogenases/reductases (SDR) family. In terms of tissue distribution, detected in prostate, liver and kidney.

It is found in the microsome membrane. Its subcellular location is the endoplasmic reticulum membrane. It carries out the reaction all-trans-retinol--[retinol-binding protein] + NAD(+) = all-trans-retinal--[retinol-binding protein] + NADH + H(+). The catalysed reaction is all-trans-retinol + NAD(+) = all-trans-retinal + NADH + H(+). The enzyme catalyses androsterone + NAD(+) = 5alpha-androstan-3,17-dione + NADH + H(+). It catalyses the reaction testosterone + NAD(+) = androst-4-ene-3,17-dione + NADH + H(+). It carries out the reaction 5alpha-androstane-3alpha,17beta-diol + NAD(+) = 17beta-hydroxy-5alpha-androstan-3-one + NADH + H(+). The catalysed reaction is 17beta-estradiol + NAD(+) = estrone + NADH + H(+). The enzyme catalyses 17beta-estradiol + NADP(+) = estrone + NADPH + H(+). It catalyses the reaction 3alpha-hydroxy-5alpha-pregnan-20-one + NAD(+) = 5alpha-pregnane-3,20-dione + NADH + H(+). It carries out the reaction 5alpha-androstane-3beta,17beta-diol + NAD(+) = 17beta-hydroxy-5alpha-androstan-3-one + NADH + H(+). The catalysed reaction is 3beta-hydroxy-5alpha-androstan-17-one + NAD(+) = 5alpha-androstan-3,17-dione + NADH + H(+). Competitively inhibited by 9-cis-retinoic acid and 13-cis-retinoic acid. Functionally, NAD-dependent oxidoreductase with broad substrate specificity that shows both oxidative and reductive activity (in vitro). Has retinol dehydrogenase activity towards all-trans-retinol (in vitro). Has 17-beta-hydroxysteroid dehydrogenase activity towards various steroids (in vitro). Converts 5-alpha-androstan-3-alpha,17-beta-diol to androsterone and estradiol to estrone (in vitro). Has 3-alpha-hydroxysteroid dehydrogenase activity towards androsterone (in vitro). The protein is 17-beta-hydroxysteroid dehydrogenase type 6 (Hsd17b6) of Rattus norvegicus (Rat).